The following is a 61-amino-acid chain: N-acetyl-D-glucosamine kinase (61 aa).

Phosphotyrosine is present on Tyr30. Position 45 (Ser45) interacts with ATP.

It belongs to the eukaryotic-type N-acetylglucosamine kinase family. Homodimer.

The catalysed reaction is N-acetyl-D-glucosamine + ATP = N-acetyl-D-glucosamine 6-phosphate + ADP + H(+). The enzyme catalyses aldehydo-N-acetyl-D-mannosamine + ATP = aldehydo-N-acetyl-D-mannosamine 6-phosphate + ADP + H(+). It catalyses the reaction N-acetyl-D-muramoyl-L-alanyl-D-isoglutamine + ATP = 6-O-phospho-N-acetyl-D-muramoyl-L-alanyl-D-isoglutamine + ADP + H(+). Its pathway is amino-sugar metabolism; N-acetylneuraminate degradation. Its function is as follows. Converts endogenous N-acetylglucosamine (GlcNAc), a major component of complex carbohydrates, from lysosomal degradation or nutritional sources into GlcNAc 6-phosphate. Also has N-acetylmannosamine (ManNAc) kinase activity. Involved in the N-glycolylneuraminic acid (Neu5Gc) degradation pathway. Also involved in innate immunity by promoting detection of bacterial peptidoglycan by NOD2: acts by catalyzing phosphorylation of muramyl dipeptide (MDP), a fragment of bacterial peptidoglycan, to generate 6-O-phospho-muramyl dipeptide, which acts as a direct ligand for NOD2. The protein is N-acetyl-D-glucosamine kinase of Mesocricetus auratus (Golden hamster).